The following is a 581-amino-acid chain: Arginine--tRNA ligase (581 aa).

The 'HIGH' region signature appears at 126 to 136 (PNLAKEMHVGH).

Belongs to the class-I aminoacyl-tRNA synthetase family. As to quaternary structure, monomer.

It localises to the cytoplasm. The enzyme catalyses tRNA(Arg) + L-arginine + ATP = L-arginyl-tRNA(Arg) + AMP + diphosphate. In Shewanella amazonensis (strain ATCC BAA-1098 / SB2B), this protein is Arginine--tRNA ligase.